A 177-amino-acid chain; its full sequence is Large ribosomal subunit protein uL6 (177 aa).

It belongs to the universal ribosomal protein uL6 family. As to quaternary structure, part of the 50S ribosomal subunit.

Its function is as follows. This protein binds to the 23S rRNA, and is important in its secondary structure. It is located near the subunit interface in the base of the L7/L12 stalk, and near the tRNA binding site of the peptidyltransferase center. This Agrobacterium fabrum (strain C58 / ATCC 33970) (Agrobacterium tumefaciens (strain C58)) protein is Large ribosomal subunit protein uL6.